An 88-amino-acid polypeptide reads, in one-letter code: Small ribosomal subunit protein uS15 (88 aa).

This sequence belongs to the universal ribosomal protein uS15 family. As to quaternary structure, part of the 30S ribosomal subunit. Forms a bridge to the 50S subunit in the 70S ribosome, contacting the 23S rRNA.

Its function is as follows. One of the primary rRNA binding proteins, it binds directly to 16S rRNA where it helps nucleate assembly of the platform of the 30S subunit by binding and bridging several RNA helices of the 16S rRNA. Forms an intersubunit bridge (bridge B4) with the 23S rRNA of the 50S subunit in the ribosome. This chain is Small ribosomal subunit protein uS15, found in Polaromonas sp. (strain JS666 / ATCC BAA-500).